The primary structure comprises 97 residues: Small ribosomal subunit protein bS6 (97 aa).

It belongs to the bacterial ribosomal protein bS6 family.

In terms of biological role, binds together with bS18 to 16S ribosomal RNA. The polypeptide is Small ribosomal subunit protein bS6 (Limosilactobacillus fermentum (strain NBRC 3956 / LMG 18251) (Lactobacillus fermentum)).